A 569-amino-acid chain; its full sequence is MGSTLGCHRSIPRDPSDLSHSRKFSAACNFSNILVNQERLNINTATEEELMTLPGVTRAVARSIVEYREYIGGFKKVEDLALVSGVGATKLEQVKFEICVSSKGNSAQHSPSSLRRDLLAEQQPHHLATTVPLTPRVNINTATLAQLMSVRGLSEKMAVSIVDYRREHGPFRSVEDLVRMDGINAAFLDRIRHQVFAERSRPPSTHTNGGLTFTAKPHPSPTSLSLQSEDLDLPPGGPTQIISMRPSVEAFGGMRDGRPVFRLATWNLQGCSVEKANNPGVREVVCMTLLENSIKLLAVQELLDKEALEKFCTELNQPILPNIRKWKGPRGCWRSIVAEKPSSQLQKGPCYSGFLWDTAANVELRDIPGQESSPSNGHAKTVGPSPFLARFKVGSNDLTLVNLQLTALALPGVENSSKNHSDGHRLLNFALTLQETLKGEKDVVILGDFGQGPDSSDYDILRREKFHHLIPAHTFTNISTRNPQGSKSVDNIWISKSLKKVFTGHWAVVREGLTNPWIPDNWSWGGVASEHCPVLAELYMEKDWSKKEVPRNGNGVTLEPSEANVKHER.

Residues 1 to 20 (MGSTLGCHRSIPRDPSDLSH) form a disordered region. Glycine 2 is lipidated: N-myristoyl glycine. The segment covering 11-20 (IPRDPSDLSH) has biased composition (basic and acidic residues). A phosphoserine mark is found at serine 16, serine 21, and serine 25. A HhH domain is found at 38–67 (ERLNINTATEEELMTLPGVTRAVARSIVEY). Phosphoserine occurs at positions 106, 110, 160, and 173. The segment at 200-224 (SRPPSTHTNGGLTFTAKPHPSPTSL) is disordered. A compositionally biased stretch (polar residues) spans 202 to 211 (PPSTHTNGGL). Threonine 265 carries the phosphothreonine modification. Positions 548–569 (EVPRNGNGVTLEPSEANVKHER) are disordered.

The protein is Endonuclease/exonuclease/phosphatase family domain-containing protein 1 (Eepd1) of Rattus norvegicus (Rat).